We begin with the raw amino-acid sequence, 535 residues long: UDP-glycosyltransferase stmC (535 aa).

Residues N70 and N422 are each glycosylated (N-linked (GlcNAc...) asparagine). The helical transmembrane segment at 506–526 (ASNLDLYIVCIAFVAVPVGVA) threads the bilayer.

Belongs to the glycosyltransferase 28 family.

It is found in the membrane. The catalysed reaction is stromemycin aglycone + UDP-alpha-D-glucose = stromemycin + UDP + H(+). It carries out the reaction exophillate aglycone + UDP-alpha-D-glucose = exophillate + UDP + H(+). The protein operates within mycotoxin biosynthesis. Functionally, UDP-glycosyltransferase; part of the gene cluster that mediates the biosynthesis of stromemycin, a depside C-glucoside with two unsaturated C9 side chains belonging to aromatic polyketide glycosides. Acts as the tailoring enzyme responsible for 3-C-glucosylation of bininalkenylresorcylic acid produced by the combined action of the HR-PKS stmA and the NR-PKS stmB to yield stromemycin. Possesses a relatively strict acceptor specificity towards bininalkenylresorcylic acid for C-glycosylation, but is able to use several donors including UDP-alpha-D-galactose, UDP-alpha-D-xylose, UDP-alpha-D-4-keto-6-deoxyglucose, UDP-alpha-D-quinovose, and UDP-beta-L-rhamnose. The polypeptide is UDP-glycosyltransferase stmC (Aspergillus ustus).